A 98-amino-acid polypeptide reads, in one-letter code: Putative pterin-4-alpha-carbinolamine dehydratase (98 aa).

Belongs to the pterin-4-alpha-carbinolamine dehydratase family.

It carries out the reaction (4aS,6R)-4a-hydroxy-L-erythro-5,6,7,8-tetrahydrobiopterin = (6R)-L-erythro-6,7-dihydrobiopterin + H2O. This chain is Putative pterin-4-alpha-carbinolamine dehydratase, found in Chelativorans sp. (strain BNC1).